The chain runs to 66 residues: LYR motif-containing protein PHYPADRAFT_186863 (66 aa).

It belongs to the complex I LYR family. LYRM9 subfamily.

The protein is LYR motif-containing protein PHYPADRAFT_186863 of Physcomitrium patens (Spreading-leaved earth moss).